The following is a 412-amino-acid chain: Multifunctional CCA protein (412 aa).

2 residues coordinate ATP: Gly-8 and Arg-11. 2 residues coordinate CTP: Gly-8 and Arg-11. Mg(2+) contacts are provided by Asp-21 and Asp-23. ATP-binding residues include Arg-91, Arg-137, and Arg-140. Residues Arg-91, Arg-137, and Arg-140 each coordinate CTP. The HD domain occupies 228–329 (TGIHTLMTLS…VKLFDSIDAW (102 aa)).

This sequence belongs to the tRNA nucleotidyltransferase/poly(A) polymerase family. Bacterial CCA-adding enzyme type 1 subfamily. As to quaternary structure, monomer. Can also form homodimers and oligomers. Mg(2+) is required as a cofactor. Requires Ni(2+) as cofactor.

The enzyme catalyses a tRNA precursor + 2 CTP + ATP = a tRNA with a 3' CCA end + 3 diphosphate. It carries out the reaction a tRNA with a 3' CCA end + 2 CTP + ATP = a tRNA with a 3' CCACCA end + 3 diphosphate. Functionally, catalyzes the addition and repair of the essential 3'-terminal CCA sequence in tRNAs without using a nucleic acid template. Adds these three nucleotides in the order of C, C, and A to the tRNA nucleotide-73, using CTP and ATP as substrates and producing inorganic pyrophosphate. tRNA 3'-terminal CCA addition is required both for tRNA processing and repair. Also involved in tRNA surveillance by mediating tandem CCA addition to generate a CCACCA at the 3' terminus of unstable tRNAs. While stable tRNAs receive only 3'-terminal CCA, unstable tRNAs are marked with CCACCA and rapidly degraded. In Shigella flexneri, this protein is Multifunctional CCA protein.